Consider the following 338-residue polypeptide: Holliday junction branch migration complex subunit RuvB (338 aa).

The tract at residues 1–181 is large ATPase domain (RuvB-L); sequence MTTRTISPEK…FGVISRLEFY (181 aa). ATP-binding positions include L20, R21, G62, K65, T66, T67, 128–130, R171, Y181, and R218; that span reads EDF. A Mg(2+)-binding site is contributed by T66. Positions 182–252 are small ATPAse domain (RuvB-S); that stretch reads TDAELSTIVT…VVDESLKLLE (71 aa). Positions 255 to 338 are head domain (RuvB-H); the sequence is EKGFDQMDRT…APAPGQGALF (84 aa). Residues R291, R310, and R315 each coordinate DNA.

It belongs to the RuvB family. In terms of assembly, homohexamer. Forms an RuvA(8)-RuvB(12)-Holliday junction (HJ) complex. HJ DNA is sandwiched between 2 RuvA tetramers; dsDNA enters through RuvA and exits via RuvB. An RuvB hexamer assembles on each DNA strand where it exits the tetramer. Each RuvB hexamer is contacted by two RuvA subunits (via domain III) on 2 adjacent RuvB subunits; this complex drives branch migration. In the full resolvosome a probable DNA-RuvA(4)-RuvB(12)-RuvC(2) complex forms which resolves the HJ.

The protein localises to the cytoplasm. The catalysed reaction is ATP + H2O = ADP + phosphate + H(+). The RuvA-RuvB-RuvC complex processes Holliday junction (HJ) DNA during genetic recombination and DNA repair, while the RuvA-RuvB complex plays an important role in the rescue of blocked DNA replication forks via replication fork reversal (RFR). RuvA specifically binds to HJ cruciform DNA, conferring on it an open structure. The RuvB hexamer acts as an ATP-dependent pump, pulling dsDNA into and through the RuvAB complex. RuvB forms 2 homohexamers on either side of HJ DNA bound by 1 or 2 RuvA tetramers; 4 subunits per hexamer contact DNA at a time. Coordinated motions by a converter formed by DNA-disengaged RuvB subunits stimulates ATP hydrolysis and nucleotide exchange. Immobilization of the converter enables RuvB to convert the ATP-contained energy into a lever motion, pulling 2 nucleotides of DNA out of the RuvA tetramer per ATP hydrolyzed, thus driving DNA branch migration. The RuvB motors rotate together with the DNA substrate, which together with the progressing nucleotide cycle form the mechanistic basis for DNA recombination by continuous HJ branch migration. Branch migration allows RuvC to scan DNA until it finds its consensus sequence, where it cleaves and resolves cruciform DNA. The sequence is that of Holliday junction branch migration complex subunit RuvB from Geobacter sulfurreducens (strain ATCC 51573 / DSM 12127 / PCA).